The primary structure comprises 97 residues: C-C motif chemokine 7 (97 aa).

The signal sequence occupies residues 1-23 (MRISATLLCLLLIAAAFSIQVWA). Position 24 is a pyrrolidone carboxylic acid (Gln-24). Asn-29 is a glycosylation site (N-linked (GlcNAc...) asparagine). 2 cysteine pairs are disulfide-bonded: Cys-33–Cys-57 and Cys-34–Cys-73.

It belongs to the intercrine beta (chemokine CC) family. Monomer. Interacts with TNFAIP6 (via Link domain).

The protein resides in the secreted. Its function is as follows. Chemotactic factor that attracts monocytes and eosinophils, but not neutrophils. Augments monocyte anti-tumor activity. The sequence is that of C-C motif chemokine 7 (Ccl7) from Mus musculus (Mouse).